Reading from the N-terminus, the 215-residue chain is uncharacterized protein (215 aa).

Positions 1–17 (MKKVLASATILSLMLVG) are cleaved as a signal peptide. Residues 17 to 110 (GCSNGGNDES…NKQQQSVQDN (94 aa)) are disordered. C18 carries the N-palmitoyl cysteine lipid modification. A lipid anchor (S-diacylglycerol cysteine) is attached at C18. The segment covering 25–69 (ESSHKDDSSKTEQKDKSSSQHDSKKDSKRNDTNNKQDNQENKSNK) has biased composition (basic and acidic residues). The span at 70–95 (EQTSNQNSNAGEQRTSERPTTNSNGI) shows a compositional bias: polar residues. The span at 96-110 (SSDNQNKQQQSVQDN) shows a compositional bias: low complexity.

The protein resides in the cell membrane. This is an uncharacterized protein from Staphylococcus epidermidis (strain ATCC 12228 / FDA PCI 1200).